We begin with the raw amino-acid sequence, 108 residues long: UPF0060 membrane protein RSKD131_0092 (108 aa).

4 helical membrane passes run Leu-5–Trp-25, Ala-32–Thr-52, Ala-62–Val-82, and Arg-86–Pro-106.

The protein belongs to the UPF0060 family.

The protein localises to the cell inner membrane. The sequence is that of UPF0060 membrane protein RSKD131_0092 from Cereibacter sphaeroides (strain KD131 / KCTC 12085) (Rhodobacter sphaeroides).